A 722-amino-acid polypeptide reads, in one-letter code: Endoglucanase F (722 aa).

Positions 1 to 29 are cleaved as a signal peptide; that stretch reads MSKNFKRVGAVAVAAAMSLSIMATTSINA. The interval 142–165 is disordered; that stretch reads PEFQDPSKYPSPLDTSQPVGRDPI. Positions 154 to 165 are enriched in polar residues; it reads LDTSQPVGRDPI. In terms of domain architecture, Dockerin spans 661–722; that stretch reads PEKLLGDVNG…LLKKALLSIQ (62 aa).

This sequence belongs to the glycosyl hydrolase 48 (cellulase L) family.

It catalyses the reaction Endohydrolysis of (1-&gt;4)-beta-D-glucosidic linkages in cellulose, lichenin and cereal beta-D-glucans.. Probable endoglucanase involved in the degradation of cellulose or related beta-glucans. In Ruminiclostridium cellulolyticum (strain ATCC 35319 / DSM 5812 / JCM 6584 / H10) (Clostridium cellulolyticum), this protein is Endoglucanase F (celCCF).